The chain runs to 352 residues: Phosphate acyltransferase (352 aa).

The segment covering 328–339 has biased composition (basic and acidic residues); it reads ESFPGDAREREG. The segment at 328–352 is disordered; that stretch reads ESFPGDAREREGAQAPDAGTERVAS.

Belongs to the PlsX family. Homodimer. Probably interacts with PlsY.

Its subcellular location is the cytoplasm. The enzyme catalyses a fatty acyl-[ACP] + phosphate = an acyl phosphate + holo-[ACP]. It participates in lipid metabolism; phospholipid metabolism. Functionally, catalyzes the reversible formation of acyl-phosphate (acyl-PO(4)) from acyl-[acyl-carrier-protein] (acyl-ACP). This enzyme utilizes acyl-ACP as fatty acyl donor, but not acyl-CoA. The sequence is that of Phosphate acyltransferase from Geobacter sp. (strain M21).